A 251-amino-acid chain; its full sequence is 3-deoxy-manno-octulosonate cytidylyltransferase (251 aa).

It belongs to the KdsB family.

It is found in the cytoplasm. It catalyses the reaction 3-deoxy-alpha-D-manno-oct-2-ulosonate + CTP = CMP-3-deoxy-beta-D-manno-octulosonate + diphosphate. It participates in nucleotide-sugar biosynthesis; CMP-3-deoxy-D-manno-octulosonate biosynthesis; CMP-3-deoxy-D-manno-octulosonate from 3-deoxy-D-manno-octulosonate and CTP: step 1/1. The protein operates within bacterial outer membrane biogenesis; lipopolysaccharide biosynthesis. Activates KDO (a required 8-carbon sugar) for incorporation into bacterial lipopolysaccharide in Gram-negative bacteria. This chain is 3-deoxy-manno-octulosonate cytidylyltransferase, found in Rhizobium leguminosarum bv. trifolii (strain WSM2304).